The primary structure comprises 429 residues: TNF receptor-associated factor family protein DDB_G0267744 (429 aa).

An RING-type; degenerate zinc finger spans residues 22-60 (CVICSHLQVDIYQCVEGHFACKNCFLKMIELKKQCMTCR). TRAF-type zinc fingers lie at residues 151–203 (HHLK…GEFN) and 204–265 (NHQD…SNSE).

Belongs to the TNF receptor-associated factor family.

It localises to the cytoplasm. Its function is as follows. Probable adapter protein and signal transducer that links members of the tumor necrosis factor receptor family to different signaling pathways by association with the receptor cytoplasmic domain and kinases. The polypeptide is TNF receptor-associated factor family protein DDB_G0267744 (Dictyostelium discoideum (Social amoeba)).